We begin with the raw amino-acid sequence, 383 residues long: Non-structural maintenance of chromosomes element 4 homolog B (383 aa).

Residues 1 to 22 (MRNSVKWETELTGDRSRRREAD) are compositionally biased toward basic and acidic residues. 3 disordered regions span residues 1-59 (MRNS…EQGI), 198-231 (MKQR…EKKS), and 355-383 (QGSV…NGGL). Residues 201 to 212 (RKSRVGNRKRTK) are compositionally biased toward basic residues. The segment covering 355–372 (QGSVIQEETVVEDSSNME) has biased composition (polar residues).

The protein belongs to the NSE4 family. In terms of assembly, interacts with SMC5, SMC6A or SMC6B. The SMC5-SMC6 complex is composed of the SMC5 and SMC6 heterodimer attached via their hinge domain and from the non-SMC subunit NSE4A or NSE4B. As to expression, not expressed in seedlings, rosette leaves and floral buds.

The protein localises to the nucleus. Component of the SMC5-SMC6 complex, that promotes sister chromatid alignment after DNA damage and facilitates double-stranded DNA breaks (DSBs) repair via homologous recombination between sister chromatids. The polypeptide is Non-structural maintenance of chromosomes element 4 homolog B (NSE4B) (Arabidopsis thaliana (Mouse-ear cress)).